The sequence spans 184 residues: Cytidylate kinase (184 aa).

Position 8 to 16 (8 to 16) interacts with ATP; that stretch reads GQPGSGKTT.

It belongs to the cytidylate kinase family. Type 2 subfamily.

It is found in the cytoplasm. The enzyme catalyses CMP + ATP = CDP + ADP. The catalysed reaction is dCMP + ATP = dCDP + ADP. In Pyrobaculum neutrophilum (strain DSM 2338 / JCM 9278 / NBRC 100436 / V24Sta) (Thermoproteus neutrophilus), this protein is Cytidylate kinase.